The sequence spans 204 residues: Recombination protein RecR (204 aa).

Residues Cys-58–Cys-75 form a C4-type zinc finger. Residues Ser-83 to Pro-181 enclose the Toprim domain.

It belongs to the RecR family.

Its function is as follows. May play a role in DNA repair. It seems to be involved in an RecBC-independent recombinational process of DNA repair. It may act with RecF and RecO. This chain is Recombination protein RecR, found in Chlorobium phaeobacteroides (strain BS1).